We begin with the raw amino-acid sequence, 927 residues long: MSTLNNLTKTLTQQVDDGPISAVRLVKGYDNSYALNAAGQVTALSIGNSSLKKLVLGTEAQALEYLYLSGSESLKEVVFEVPLPHLTHLYLNNCAIKDITIPKGFRSLQQVYLQKNGLTELVFEGDCPALVLLDVSENQLKGLSFHSGFRALKYIYATNNVLQKITFNRSMRLLNTLHLAKNQLTELAPFLSEIETMETLYLQGNQLLRIDREIWDRDLNCWDTMKGYLTSLNKGNIIREYLHEAKMILIGNGEVGKTSIRLKLLDINAPLPDKKDRTPGLDIVPYTIANLSSAQTGLPASTSFTFNIWDFGGQGKYREIQQLFCSRKSLYLYVTAYDDTADYNELYVGYEYWLAMANAYNNDSGQHSPVIYVQNKNDMGEKPINEEEVKHKFGNVGAFIKISCVDKEQFTALPKLIVKSISKISEDIFTVQYNSEWLGVKEDLNELKNQGTNYISKEEFITICTERGLSEDEIRAWLTVLDRIGAVIYFGDNEKLKDWIVLNPIWVKDAICKVIDFEFYDDIATLKPSFLPKIWEEYSESEREKLLQLLISYHFCYKEEESFIVPALFTENQPKYPEHLSSFDCEIKLKYVSFLPAGTLHKFMVKLHDKIYNELRWKKGVVLQDGATNTYAEVTERWKEHSIYIRLKDKKGQHPLWQEIQKTLQELNEELKTTKLMQLDFEVYCFYNNKWKAKPDIEDLCELDSTNIFKFMFGLSSPVKEYISQKPTPLLGKAKLSIIFLTADPENKNPIGASVQKQRIENTISDAFEFYNNLETKYNEIGSNTVGKDIVHITVHGIPDQLFFVHDKHTDQSNPVQSDYLCKQLEKTKQVKKLIVLIACNSETTAKKIVDGGLTKYAIGTTIDISSKAAIDFSEKFYDLLKNSPLQIESVFEETCYELNQDKYRAKLDDGEFYDYSKVFKIFKKTT.

LRR repeat units follow at residues 38–61, 83–107, 109–125, and 127–151; these read AGQV…TEAQ, LPHL…GFRS, QQVY…VFEG, and CPAL…GFRA. The LRR 5 stretch occupies residues 152-170; that stretch reads LKYIYATNNVLQKITFNRS. LRR repeat units lie at residues 171 to 194 and 195 to 217; these read MRLL…LSEI and ETME…IWDR. Residues 436 to 623 form the COR domain; that stretch reads EWLGVKEDLN…ELRWKKGVVL (188 aa). Residues H796 and C840 contribute to the active site.

In terms of biological role, a dedicated protease for gasdermin bGSDM; cleaves the bGSDM precursor, releasing the pore-forming moiety, which integrates into the membrane and triggers cell death. Probably involved in defense against bacteriophages. Expression of bGSDM and this neighboring protease is highly toxic in E.coli. Cells expressing the gene pair stop dividing and lose membrane integrity. Both proteins are required to kill E.coli. The bGSDM recognition site is larger than the 8 residues surrounding the cleavage site; replacement of the endogenous recognition site by the Runella site (NRVLGENM) in a number of other bGSDMs is not sufficient for them to be cleaved. The sequence is that of Roc-COR-CHAT protease from Runella zeae (strain ATCC BAA-293 / DSM 19591 / LMG 21438 / NS12).